The following is a 471-amino-acid chain: MSAPTNLEQVLAAGGNTVEMLRNSQIGAYVYPVVAPEFSNWRTEQWAWRNSAVLFDQTHHMVDLYIRGKDALKLLSDTMINSPKGWEPNKAKQYVPVTPYGHVIGDGIIFYLAEEEFVYVGRAPAANWLMYHAQTGGYNVDIVHDDRSPSRPMGKPVQRISWRFQIQGPKAWDVIEKLHGGTLEKLKFFNMAEMNIAGMKIRTLRHGMAGAPGLEIWGPYETQEKARNAILEAGKEFGLIPVGSRAYPSNTLESGWIPSPLPAIYTGDKLKAYREWLPANSYEASGAIGGSFVSSNIEDYYVNPYEIGYGPFVKFDHDFIGRDALEAIDPATQRKKVTLAWNGDDMAKIYASLFDTEADAHYKFFDLPLANYANTNADAVLDAAGNVVGMSMFTGYSYNEKRALSLATIDHEIPVGTELTVLWGEENGGTRKTTVEPHKQMAVRAVVSPVPYSVTARETYEGGWRKAAVTA.

Tyr31 contacts substrate. A (6S)-5,6,7,8-tetrahydrofolate-binding site is contributed by Gln57. His60 is a substrate binding site. The (6S)-5,6,7,8-tetrahydrofolate site is built by Gln93 and Val120. Arg122 serves as a coordination point for substrate. Positions 165 and 215 each coordinate (6S)-5,6,7,8-tetrahydrofolate. Position 247–250 (247–250) interacts with substrate; the sequence is YPSN. Trp256 is a binding site for (6S)-5,6,7,8-tetrahydrofolate.

This sequence belongs to the GcvT family. In terms of assembly, homodimer.

It catalyses the reaction vanillate + (6S)-5,6,7,8-tetrahydrofolate = (6S)-5-methyl-5,6,7,8-tetrahydrofolate + 3,4-dihydroxybenzoate. It carries out the reaction 3-O-methylgallate + (6S)-5,6,7,8-tetrahydrofolate = 3,4,5-trihydroxybenzoate + (6S)-5-methyl-5,6,7,8-tetrahydrofolate. The protein operates within secondary metabolite metabolism; lignin degradation. Involved in the catabolism of vanillate and syringate. Catalyzes the transfer of a methyl moiety from vanillate or 3-O-methylgallate (3MGA) to tetrahydrofolate, forming protocatechuate (PCA) or gallate, respectively, and methyl-tetrahydrofolate. Has similar activities with both substrates. Cannot use syringate. Uses an ordered, sequential kinetic mechanism. The polypeptide is Vanillate/3-O-methylgallate O-demethylase (Sphingobium sp. (strain NBRC 103272 / SYK-6)).